Reading from the N-terminus, the 745-residue chain is Junction plakoglobin (745 aa).

Residue Met-1 is modified to N-acetylmethionine. O-linked (GlcNAc) threonine glycosylation occurs at Thr-14. Phosphoserine is present on residues Ser-99 and Ser-125. ARM repeat units follow at residues 132 to 171, 172 to 215, 216 to 255, 258 to 297, 298 to 341, 342 to 381, 383 to 420, 423 to 464, 470 to 510, 512 to 551, 574 to 613, and 615 to 661; these read NYQD…QLSK, KEAS…LSHH, REGL…NLLL, EGAK…LLAY, GNQE…LSVC, PSNK…NLSD, ATKQ…NLTC, SKNK…HLTS, EMAQ…NLAL, PANH…QPYT, PMNR…ELAQ, and KEAA…PDYR. Residues 132-297 are interaction with DSC1 and DSG1; it reads NYQDDAELAT…TTDCLQLLAY (166 aa). Ser-182 bears the Phosphoserine mark. Residues 574–661 form an interaction with DSC1 region; sequence PMNRMEIFRL…ISEDKNPDYR (88 aa). A phosphoserine mark is found at Ser-665 and Ser-730.

This sequence belongs to the beta-catenin family. As to quaternary structure, homodimer. Component of an E-cadherin/catenin adhesion complex composed of at least E-cadherin/CDH1 and gamma-catenin/JUP, and possibly alpha-catenin/CTNNA1; the complex is located to adherens junctions. The stable association of CTNNA1 is controversial as CTNNA1 was shown not to bind to F-actin when assembled in the complex. Interacts with MUC1. Interacts with CAV1. Interacts with PTPRJ. Interacts with DSG1. Interacts with DSC1 and DSC2. Interacts with PKP2. Interacts with PKP3 (via N-terminus); the interaction is required for PKP3 localization to desmosome cell-cell junctions. Interacts with DSG4. In terms of processing, may be phosphorylated by FER. In terms of tissue distribution, expressed in the heart (at protein level).

It localises to the cell junction. It is found in the adherens junction. The protein localises to the desmosome. The protein resides in the cytoplasm. Its subcellular location is the cytoskeleton. It localises to the cell membrane. It is found in the nucleus. Common junctional plaque protein. The membrane-associated plaques are architectural elements in an important strategic position to influence the arrangement and function of both the cytoskeleton and the cells within the tissue. The presence of plakoglobin in both the desmosomes and in the intermediate junctions suggests that it plays a central role in the structure and function of submembranous plaques. Acts as a substrate for VE-PTP and is required by it to stimulate VE-cadherin function in endothelial cells. Can replace beta-catenin in E-cadherin/catenin adhesion complexes which are proposed to couple cadherins to the actin cytoskeleton. This Rattus norvegicus (Rat) protein is Junction plakoglobin.